Reading from the N-terminus, the 232-residue chain is Cytidylate kinase (232 aa).

An ATP-binding site is contributed by 11–19; the sequence is GPAGAGKST.

It belongs to the cytidylate kinase family. Type 1 subfamily.

It localises to the cytoplasm. It catalyses the reaction CMP + ATP = CDP + ADP. The catalysed reaction is dCMP + ATP = dCDP + ADP. In Desulfitobacterium hafniense (strain Y51), this protein is Cytidylate kinase.